The sequence spans 325 residues: Probable 4-hydroxy-tetrahydrodipicolinate reductase 2, chloroplastic (325 aa).

The N-terminal 32 residues, 1-32 (MLSLRPPCTLSPAPWRRRRTLHGAAGTPQRVS), are a transit peptide targeting the chloroplast. NAD(+) is bound by residues 57-62 (GCTGKM), 149-151 (GTT), and 172-175 (SPQM). H208 (proton donor/acceptor) is an active-site residue. The active-site Proton donor is K212. 217–218 (GT) contributes to the (S)-2,3,4,5-tetrahydrodipicolinate binding site.

It belongs to the DapB family.

The protein localises to the plastid. It localises to the chloroplast. It catalyses the reaction (S)-2,3,4,5-tetrahydrodipicolinate + NAD(+) + H2O = (2S,4S)-4-hydroxy-2,3,4,5-tetrahydrodipicolinate + NADH + H(+). It carries out the reaction (S)-2,3,4,5-tetrahydrodipicolinate + NADP(+) + H2O = (2S,4S)-4-hydroxy-2,3,4,5-tetrahydrodipicolinate + NADPH + H(+). It participates in amino-acid biosynthesis; L-lysine biosynthesis via DAP pathway; (S)-tetrahydrodipicolinate from L-aspartate: step 4/4. Functionally, catalyzes the conversion of 4-hydroxy-tetrahydrodipicolinate (HTPA) to tetrahydrodipicolinate. This chain is Probable 4-hydroxy-tetrahydrodipicolinate reductase 2, chloroplastic (DAPB2), found in Oryza sativa subsp. japonica (Rice).